The chain runs to 410 residues: Cysteine desulfurase IscS (410 aa).

Pyridoxal 5'-phosphate-binding positions include 80 to 81 (AT), Asn-160, Gln-188, and 208 to 210 (SGH). At Lys-211 the chain carries N6-(pyridoxal phosphate)lysine. Thr-248 serves as a coordination point for pyridoxal 5'-phosphate. The active-site Cysteine persulfide intermediate is the Cys-334. [2Fe-2S] cluster is bound at residue Cys-334.

It belongs to the class-V pyridoxal-phosphate-dependent aminotransferase family. NifS/IscS subfamily. As to quaternary structure, homodimer. Forms a heterotetramer with IscU, interacts with other sulfur acceptors. The cofactor is pyridoxal 5'-phosphate.

The protein resides in the cytoplasm. The enzyme catalyses (sulfur carrier)-H + L-cysteine = (sulfur carrier)-SH + L-alanine. It participates in cofactor biosynthesis; iron-sulfur cluster biosynthesis. Functionally, master enzyme that delivers sulfur to a number of partners involved in Fe-S cluster assembly, tRNA modification or cofactor biosynthesis. Catalyzes the removal of elemental sulfur atoms from cysteine to produce alanine. Functions as a sulfur delivery protein for Fe-S cluster synthesis onto IscU, an Fe-S scaffold assembly protein, as well as other S acceptor proteins. The chain is Cysteine desulfurase IscS from Rickettsia typhi (strain ATCC VR-144 / Wilmington).